Here is a 75-residue protein sequence, read N- to C-terminus: Veswaprin-c (75 aa).

An N-terminal signal peptide occupies residues 1-24 (MSSGGLLLLLGLLTLWAELTPVSS). The region spanning 27-72 (RPKKPGLCPPRPQKPPCVRECKNDWRCPGERKCCRYGCIYECRDPI) is the WAP domain. 4 disulfide bridges follow: C34-C60, C43-C64, C47-C59, and C53-C68.

This sequence belongs to the venom waprin family. Expressed by the venom gland.

It is found in the secreted. Damages membranes of susceptible bacteria. Has no hemolytic activity. Not toxic to mice. Does not inhibit the proteinases elastase and cathepsin G. The polypeptide is Veswaprin-c (Demansia vestigiata (Lesser black whip snake)).